A 757-amino-acid chain; its full sequence is MSNPGTRRNGSSIKIRLTVLCAKNLAKKDFFRLPDPFAKIVVDGSGQCHSTDTVKNTLDPKWNQHYDLYVGKTDSITISVWNHKKIHKKQGAGFLGCVRLLSNAISRLKDTGYQRLDLCKLNPSDTDAVRGQIVVSLQTRDRIGTGGSVVDCRGLLENEGTVYEDSGPGRPLSCFMEEPAPYTDSTGAAAGGGNCRFVESPSQDQRLQAQRLRNPDVRGSLQTPQNRPHGHQSPELPEGYEQRTTVQGQVYFLHTQTGVSTWHDPRIPSPSGTIPGGDAAFLYEFLLQGHTSEPRDLNSVNCDELGPLPPGWEVRSTVSGRIYFVDHNNRTTQFTDPRLHHIMNHQCQLKEPSQPLPLPSEGSLEDEELPAQRYERDLVQKLKVLRHELSLQQPQAGHCRIEVSREEIFEESYRQIMKMRPKDLKKRLMVKFRGEEGLDYGGVAREWLYLLCHEMLNPYYGLFQYSTDNIYMLQINPDSSINPDHLSYFHFVGRIMGLAVFHGHYINGGFTVPFYKQLLGKPIQLSDLESVDPELHKSLVWILENDITPVLDHTFCVEHNAFGRILQHELKPNGRNVPVTEENKKEYVRLYVNWRFMRGIEAQFLALQKGFNELIPQHLLKPFDQKELELIIGGLDKIDLNDWKSNTRLKHCVADSNIVRWFWQAVETFDEERRARLLQFVTGSTRVPLQGFKALQGSTGAAGPRLFTIHLIDANTDNLPKAHTCFNRIDIPPYESYEKLYEKLLTAVEETCGFAVE.

The C2 domain occupies 1 to 120 (MSNPGTRRNG…TGYQRLDLCK (120 aa)). Residues 193 to 237 (GNCRFVESPSQDQRLQAQRLRNPDVRGSLQTPQNRPHGHQSPELP) form a disordered region. S200 is modified (phosphoserine). WW domains are found at residues 234–267 (PELPEGYEQRTTVQGQVYFLHTQTGVSTWHDPRI) and 306–339 (GPLPPGWEVRSTVSGRIYFVDHNNRTTQFTDPRL). Glycyl lysine isopeptide (Lys-Gly) (interchain with G-Cter in ubiquitin) cross-links involve residues K381 and K383. One can recognise an HECT domain in the interval 420–757 (RPKDLKKRLM…VEETCGFAVE (338 aa)). The Glycyl thioester intermediate role is filled by C725.

In terms of assembly, interacts with TRAF4. Interacts (via HECT domain) with FBXL15 (via LRR repeats). Interacts with SMAD7 and TGFBR1; SMAD7 recruits SMURF1 to TGFBR1 and regulates TGF-beta receptor degradation. Interacts with MAVS; the interaction is mediated by NDFIP1. Auto-ubiquitinated in presence of NDFIP1. Ubiquitinated by the SCF(FBXL15) complex at Lys-381 and Lys-383, leading to its degradation by the proteasome. Lys-383 is the primary ubiquitination site. Expressed in melanocytes.

The protein resides in the cytoplasm. The protein localises to the cell membrane. The catalysed reaction is S-ubiquitinyl-[E2 ubiquitin-conjugating enzyme]-L-cysteine + [acceptor protein]-L-lysine = [E2 ubiquitin-conjugating enzyme]-L-cysteine + N(6)-ubiquitinyl-[acceptor protein]-L-lysine.. The protein operates within protein modification; protein ubiquitination. Its function is as follows. E3 ubiquitin-protein ligase that acts as a negative regulator of BMP signaling pathway. Mediates ubiquitination and degradation of SMAD1 and SMAD5, 2 receptor-regulated SMADs specific for the BMP pathway. Promotes ubiquitination and subsequent proteasomal degradation of TRAF family members and RHOA. Promotes ubiquitination and subsequent proteasomal degradation of MAVS. Acts as an antagonist of TGF-beta signaling by ubiquitinating TGFBR1 and targeting it for degradation. Plays a role in dendrite formation by melanocytes. The protein is E3 ubiquitin-protein ligase SMURF1 (SMURF1) of Homo sapiens (Human).